The chain runs to 325 residues: Beta-ketoacyl-[acyl-carrier-protein] synthase III (325 aa).

Residues Cys116 and His252 contribute to the active site. The interval 253–257 (QANLR) is ACP-binding. Asn282 is an active-site residue.

It belongs to the thiolase-like superfamily. FabH family. In terms of assembly, homodimer.

The protein localises to the cytoplasm. It carries out the reaction malonyl-[ACP] + acetyl-CoA + H(+) = 3-oxobutanoyl-[ACP] + CO2 + CoA. The protein operates within lipid metabolism; fatty acid biosynthesis. Catalyzes the condensation reaction of fatty acid synthesis by the addition to an acyl acceptor of two carbons from malonyl-ACP. Catalyzes the first condensation reaction which initiates fatty acid synthesis and may therefore play a role in governing the total rate of fatty acid production. Possesses both acetoacetyl-ACP synthase and acetyl transacylase activities. Its substrate specificity determines the biosynthesis of branched-chain and/or straight-chain of fatty acids. In Xanthomonas oryzae pv. oryzae (strain MAFF 311018), this protein is Beta-ketoacyl-[acyl-carrier-protein] synthase III.